Reading from the N-terminus, the 131-residue chain is Large ribosomal subunit protein uL22 (131 aa).

It belongs to the universal ribosomal protein uL22 family. As to quaternary structure, part of the 50S ribosomal subunit.

Functionally, this protein binds specifically to 23S rRNA; its binding is stimulated by other ribosomal proteins, e.g. L4, L17, and L20. It is important during the early stages of 50S assembly. It makes multiple contacts with different domains of the 23S rRNA in the assembled 50S subunit and ribosome. The globular domain of the protein is located near the polypeptide exit tunnel on the outside of the subunit, while an extended beta-hairpin is found that lines the wall of the exit tunnel in the center of the 70S ribosome. The sequence is that of Large ribosomal subunit protein uL22 from Phytoplasma mali (strain AT).